We begin with the raw amino-acid sequence, 364 residues long: 3-isopropylmalate dehydrogenase (364 aa).

78–91 (GKKWDYLSIDKRPE) lines the NAD(+) pocket. Positions 99, 109, 138, and 227 each coordinate substrate. Positions 227, 251, and 255 each coordinate Mg(2+). Residue 285 to 297 (GSAPDIAGKNIAN) participates in NAD(+) binding.

It belongs to the isocitrate and isopropylmalate dehydrogenases family. LeuB type 1 subfamily. Homodimer. Mg(2+) serves as cofactor. It depends on Mn(2+) as a cofactor.

It localises to the cytoplasm. The catalysed reaction is (2R,3S)-3-isopropylmalate + NAD(+) = 4-methyl-2-oxopentanoate + CO2 + NADH. The protein operates within amino-acid biosynthesis; L-leucine biosynthesis; L-leucine from 3-methyl-2-oxobutanoate: step 3/4. Catalyzes the oxidation of 3-carboxy-2-hydroxy-4-methylpentanoate (3-isopropylmalate) to 3-carboxy-4-methyl-2-oxopentanoate. The product decarboxylates to 4-methyl-2 oxopentanoate. The chain is 3-isopropylmalate dehydrogenase from Buchnera aphidicola subsp. Uroleucon erigeronensis.